We begin with the raw amino-acid sequence, 433 residues long: GTPase Obg (433 aa).

The Obg domain occupies 1–159; it reads MKFVDSADLI…FEIRAELKVL (159 aa). The OBG-type G domain occupies 160-332; the sequence is ADVGFVGLPN…LLFMIYEELK (173 aa). GTP is bound by residues 166 to 173, 191 to 195, 213 to 216, 284 to 287, and 313 to 315; these read GLPNAGKS, FTTIN, DLPG, NKMD, and SGL. Residues Ser173 and Thr193 each contribute to the Mg(2+) site. Residues 355 to 433 form the OCT domain; it reads KFEEQKEDIQ…VFDYELEWTD (79 aa).

The protein belongs to the TRAFAC class OBG-HflX-like GTPase superfamily. OBG GTPase family. As to quaternary structure, monomer. Requires Mg(2+) as cofactor.

The protein resides in the cytoplasm. An essential GTPase which binds GTP, GDP and possibly (p)ppGpp with moderate affinity, with high nucleotide exchange rates and a fairly low GTP hydrolysis rate. Plays a role in control of the cell cycle, stress response, ribosome biogenesis and in those bacteria that undergo differentiation, in morphogenesis control. The chain is GTPase Obg from Mycoplasma capricolum subsp. capricolum (strain California kid / ATCC 27343 / NCTC 10154).